Reading from the N-terminus, the 179-residue chain is Large ribosomal subunit protein uL5 (179 aa).

It belongs to the universal ribosomal protein uL5 family. Part of the 50S ribosomal subunit; contacts the 5S rRNA and probably tRNA. Forms a bridge to the 30S subunit in the 70S ribosome.

Its function is as follows. This is one of the proteins that bind and probably mediate the attachment of the 5S RNA into the large ribosomal subunit, where it forms part of the central protuberance. In the 70S ribosome it contacts protein S13 of the 30S subunit (bridge B1b), connecting the 2 subunits; this bridge is implicated in subunit movement. May contact the P site tRNA; the 5S rRNA and some of its associated proteins might help stabilize positioning of ribosome-bound tRNAs. The polypeptide is Large ribosomal subunit protein uL5 (Pyrobaculum aerophilum (strain ATCC 51768 / DSM 7523 / JCM 9630 / CIP 104966 / NBRC 100827 / IM2)).